We begin with the raw amino-acid sequence, 588 residues long: Sperm-associated microtubule inner protein 4 (588 aa).

A Phosphothreonine modification is found at threonine 219. 5 positions are modified to phosphoserine: serine 224, serine 406, serine 421, serine 427, and serine 437. The residue at position 441 (tyrosine 441) is a Phosphotyrosine. 2 positions are modified to phosphoserine: serine 457 and serine 484. A Phosphothreonine modification is found at threonine 512. Phosphoserine is present on serine 516. Lysine 543 is covalently cross-linked (Glycyl lysine isopeptide (Lys-Gly) (interchain with G-Cter in SUMO2)). Serine 545 is subject to Phosphoserine.

Its subcellular location is the cytoplasm. The protein localises to the cytoskeleton. It is found in the microtubule organizing center. The protein resides in the centrosome. It localises to the flagellum axoneme. Microtubule inner protein (MIP) part of the dynein-decorated doublet microtubules (DMTs) in flagellum axoneme. May serve to reinforce and thus stabilize the microtubule structure in the sperm flagella. This chain is Sperm-associated microtubule inner protein 4 (Spmip4), found in Rattus norvegicus (Rat).